A 110-amino-acid chain; its full sequence is MEAKAIAKYIRLSPQKARLVAANILGRPVEEAMNILKFTPKKSAKIIGKVLHSAVANAEQISGVDIDNLTVKQVIINPGPTHKRIMTRSMGRAFRIVKRTSHITVVVAEN.

It belongs to the universal ribosomal protein uL22 family. As to quaternary structure, part of the 50S ribosomal subunit.

This protein binds specifically to 23S rRNA; its binding is stimulated by other ribosomal proteins, e.g. L4, L17, and L20. It is important during the early stages of 50S assembly. It makes multiple contacts with different domains of the 23S rRNA in the assembled 50S subunit and ribosome. In terms of biological role, the globular domain of the protein is located near the polypeptide exit tunnel on the outside of the subunit, while an extended beta-hairpin is found that lines the wall of the exit tunnel in the center of the 70S ribosome. The sequence is that of Large ribosomal subunit protein uL22 from Solidesulfovibrio magneticus (strain ATCC 700980 / DSM 13731 / RS-1) (Desulfovibrio magneticus).